The primary structure comprises 178 residues: CDP-archaeol synthase (178 aa).

The next 5 helical transmembrane spans lie at 7 to 27 (LFVS…ACIF), 56 to 76 (FFGV…SNLG), 91 to 111 (VIIG…GSFL), 125 to 145 (VLDQ…YYLV), and 149 to 169 (ISIT…IIAY).

Belongs to the CDP-archaeol synthase family. The cofactor is Mg(2+).

It is found in the cell membrane. The enzyme catalyses 2,3-bis-O-(geranylgeranyl)-sn-glycerol 1-phosphate + CTP + H(+) = CDP-2,3-bis-O-(geranylgeranyl)-sn-glycerol + diphosphate. The protein operates within membrane lipid metabolism; glycerophospholipid metabolism. Its function is as follows. Catalyzes the formation of CDP-2,3-bis-(O-geranylgeranyl)-sn-glycerol (CDP-archaeol) from 2,3-bis-(O-geranylgeranyl)-sn-glycerol 1-phosphate (DGGGP) and CTP. This reaction is the third ether-bond-formation step in the biosynthesis of archaeal membrane lipids. The chain is CDP-archaeol synthase from Methanococcus vannielii (strain ATCC 35089 / DSM 1224 / JCM 13029 / OCM 148 / SB).